Reading from the N-terminus, the 309-residue chain is Taste receptor type 2 member 124 (309 aa).

Topologically, residues 1-7 (MVSVLHS) are extracellular. A helical transmembrane segment spans residues 8–28 (ISTIIIIAEFVWGNLSNGLIV). Topologically, residues 29 to 46 (LKNCLDWINIKELSTLDQ) are cytoplasmic. Residues 47 to 67 (ILILLAISRISLIWETLLMWV) form a helical membrane-spanning segment. Residues 68-81 (KDKLISSITIEELK) lie on the Extracellular side of the membrane. Residues 82 to 102 (MIMFSFMLSSHFSLWLATALS) traverse the membrane as a helical segment. The Cytoplasmic portion of the chain corresponds to 103–127 (TFYLFRIANCSWQIFLYLKWRLKHL). The chain crosses the membrane as a helical span at residues 128–148 (IVQMLLGSVMFLIANIIQITI). The Extracellular segment spans residues 149–182 (TLEKRFYQYKGNTSVNSIQNEFALLIEMMLFNMT). Residues N160 and N180 are each glycosylated (N-linked (GlcNAc...) asparagine). A helical membrane pass occupies residues 183–203 (IFSVIPFLLALISFFLLIFSL). Residues 204 to 227 (WKHLQRMQLNSREDRDPSTKAHRN) lie on the Cytoplasmic side of the membrane. A helical membrane pass occupies residues 228–248 (ALGIMVSFLLLYTMYVLSLLI). Over 249 to 261 (SWIAQKNQSELVH) the chain is Extracellular. Residue N255 is glycosylated (N-linked (GlcNAc...) asparagine). The helical transmembrane segment at 262 to 282 (IICMITSLLNPSVHSSILILG) threads the bilayer. At 283–309 (NFKLKQSSLCILRHLGCRLKSQNTPTT) the chain is on the cytoplasmic side.

Belongs to the G-protein coupled receptor T2R family.

It localises to the membrane. In terms of biological role, putative taste receptor which may play a role in the perception of bitterness. This Rattus norvegicus (Rat) protein is Taste receptor type 2 member 124.